A 36-amino-acid chain; its full sequence is Photosystem I reaction center subunit VIII (36 aa).

A helical membrane pass occupies residues 8 to 28 (SLFVPLVGLVFPAIAMASLFL).

The protein belongs to the PsaI family.

Its subcellular location is the plastid. It localises to the chloroplast thylakoid membrane. Functionally, may help in the organization of the PsaL subunit. The chain is Photosystem I reaction center subunit VIII from Brassica oleracea (Wild cabbage).